A 595-amino-acid polypeptide reads, in one-letter code: Estrogen receptor (595 aa).

The segment at 1–184 (MTMTLHTKAS…AMESAKETRY (184 aa)) is modulating (transactivation AF-1); mediates interaction with MACROD1. S10 carries an O-linked (GlcNAc) serine glycan. Residues 35 to 47 (LERPLGEVYVDSS) are required for interaction with NCOA1. The interval 35 to 174 (LERPLGEVYV…LASTSDKGSM (140 aa)) is interaction with DDX5; self-association. Phosphoserine; by CDK2 is present on residues S104 and S106. S118 is subject to Phosphoserine. Residues 144-174 (AGPPAFYRPNSDNRRQGGRERLASTSDKGSM) are disordered. Residues 154-165 (SDNRRQGGRERL) are compositionally biased toward basic and acidic residues. A Phosphoserine; by CK2 modification is found at S167. 2 consecutive NR C4-type zinc fingers follow at residues 185–205 (CAVC…CEGC) and 221–245 (CPAT…LRKC). The segment at residues 185-250 (CAVCNDYASG…RLRKCYEVGM (66 aa)) is a DNA-binding region (nuclear receptor). The mediates interaction with DNTTIP2 stretch occupies residues 185–310 (CAVCNDYASG…TKKNSPVLSL (126 aa)). The segment at 251-310 (MKGGIRKDRRGGRMLKHKRQRDDGEGRNEAVPPGDMRSANLWPSPLLIKHTKKNSPVLSL) is hinge. A compositionally biased stretch (basic residues) spans 257-269 (KDRRGGRMLKHKR). A disordered region spans residues 257 to 288 (KDRRGGRMLKHKRQRDDGEGRNEAVPPGDMRS). R260 carries the post-translational modification Asymmetric dimethylarginine; by PRMT1. Residues 262-595 (GRMLKHKRQR…GEAENFPTTI (334 aa)) are interaction with AKAP13. Residues 264–594 (MLKHKRQRDD…TGEAENFPTT (331 aa)) are self-association. Positions 311 to 547 (TADQMISALL…DLLLEMLDAH (237 aa)) constitute an NR LBD domain. The tract at residues 311 to 594 (TADQMISALL…TGEAENFPTT (284 aa)) is transactivation AF-2. The 17beta-estradiol site is built by E353 and R394. Residue C447 is the site of S-palmitoyl cysteine attachment. H524 provides a ligand contact to 17beta-estradiol. Y537 carries the phosphotyrosine; by Tyr-kinases modification. The interval 551 to 575 (APTNLGGPPPEDMSQSQLATSGSTP) is disordered. Residues 563–575 (MSQSQLATSGSTP) are compositionally biased toward polar residues.

It belongs to the nuclear hormone receptor family. NR3 subfamily. Binds DNA as a homodimer. Can form a heterodimer with ESR2. Interacts with coactivator NCOA5. Interacts with PELP1, the interaction is enhanced by 17-beta-estradiol; the interaction increases ESR1 transcriptional activity. Interacts with NCOA7; the interaction is ligand-inducible. Interacts with AKAP13, CUEDC2, HEXIM1, KDM5A, MAP1S, SMARD1, and UBE1C. Interacts with MUC1; the interaction is stimulated by 7 beta-estradiol (E2) and enhances ESR1-mediated transcription. Interacts with DNTTIP2, and UIMC1. Interacts with KMT2D/MLL2. Interacts with ATAD2; the interaction is enhanced by estradiol. Interacts with KIF18A and LDB1. Interacts with RLIM (via its C-terminus). Interacts with MACROD1. Interacts with SH2D4A and PLCG. Interacts with SH2D4A; the interaction blocks binding to PLCG and inhibits estrogen-induced cell proliferation. Interacts with DYNLL1. Interacts with CCDC62; the interaction requires estradiol and appears to enhance the transcription of target genes. Interacts with NR2C1; the interaction prevents homodimerization of ESR1 and suppresses its transcriptional activity and cell growth. Interacts with DNAAF4. Interacts with PRMT2. Interacts with RBFOX2. Interacts with EP300; the interaction is estrogen-dependent and enhanced by CITED1. Interacts with CITED1; the interaction is estrogen-dependent. Interacts with FAM120B, FOXL2, PHB2 and SLC30A9. Interacts with coactivators NCOA3 and NCOA6. Interacts with STK3/MST2 only in the presence of SAV1 and vice-versa. Binds to CSNK1D. Interacts with NCOA2; NCOA2 can interact with ESR1 AF-1 and AF-2 domains simultaneously and mediate their transcriptional synergy. Interacts with DDX5. Interacts with NCOA1; the interaction seems to require a self-association of N-terminal and C-terminal regions. Interacts with ZNF366, DDX17, NFKB1, RELA, SP1 and SP3. Interacts with NRIP1. Interacts with GPER1; the interaction occurs in an estrogen-dependent manner. Interacts with CLOCK and the interaction is stimulated by estrogen. Interacts with TRIP4 (ufmylated); estrogen dependent. Interacts with LMTK3; the interaction phosphorylates ESR1 (in vitro) and protects it against proteasomal degradation. Interacts with CCAR2 (via N-terminus) in a ligand-independent manner. Interacts with ZFHX3. Interacts with SFR1 in a ligand-dependent and -independent manner. Interacts with DCAF13, LATS1 and DCAF1; regulates ESR1 ubiquitination and ubiquitin-mediated proteasomal degradation. Interacts (via DNA-binding domain) with POU4F2 (C-terminus); this interaction increases the estrogen receptor ESR1 transcriptional activity in a DNA- and ligand 17-beta-estradiol-independent manner. Interacts with ESRRB isoform 1. Interacts with UBE3A and WBP2. Interacts with GTF2B. Interacts with RBM39. In the absence of hormonal ligand, interacts with TACC1. Interacts with PI3KR1 or PI3KR2 and PTK2/FAK1. Interacts with SRC. Interacts with BAG1; the interaction is promoted in the absence of estradiol (17-beta-estradiol/E2). Interacts with and ubiquitinated by STUB1; the interaction is promoted in the absence of estradiol (17-beta-estradiol/E2). Interacts with NEDD8. In terms of processing, phosphorylated by cyclin A/CDK2 and CK1. Phosphorylation probably enhances transcriptional activity. Dephosphorylation at Ser-118 by PPP5C inhibits its transactivation activity. Phosphorylated by LMTK3 (in vitro). Post-translationally, ubiquitinated; regulated by LATS1 via DCAF1 it leads to ESR1 proteasomal degradation. Deubiquitinated by OTUB1. Ubiquitinated by STUB1/CHIP; in the CA1 hippocampal region following loss of endogenous circulating estradiol (17-beta-estradiol/E2). Ubiquitinated by UBR5, leading to its degradation: UBR5 specifically recognizes and binds ligand-bound ESR1 when it is not associated with coactivators (NCOAs). In presence of NCOAs, the UBR5-degron is not accessible, preventing its ubiquitination and degradation. Palmitoylated at Cys-447 by ZDHHC7 and ZDHHC21. Palmitoylation is required for plasma membrane targeting and for rapid intracellular signaling via ERK and AKT kinases and cAMP generation, but not for signaling mediated by the nuclear hormone receptor. In terms of processing, dimethylated by PRMT1 at Arg-260. The methylation may favor cytoplasmic localization. Demethylated by JMJD6 at Arg-260.

Its subcellular location is the nucleus. The protein localises to the cytoplasm. It is found in the golgi apparatus. The protein resides in the cell membrane. Its function is as follows. Nuclear hormone receptor. The steroid hormones and their receptors are involved in the regulation of eukaryotic gene expression and affect cellular proliferation and differentiation in target tissues. Ligand-dependent nuclear transactivation involves either direct homodimer binding to a palindromic estrogen response element (ERE) sequence or association with other DNA-binding transcription factors, such as AP-1/c-Jun, c-Fos, ATF-2, Sp1 and Sp3, to mediate ERE-independent signaling. Ligand binding induces a conformational change allowing subsequent or combinatorial association with multiprotein coactivator complexes through LXXLL motifs of their respective components. Mutual transrepression occurs between the estrogen receptor (ER) and NF-kappa-B in a cell-type specific manner. Decreases NF-kappa-B DNA-binding activity and inhibits NF-kappa-B-mediated transcription from the IL6 promoter and displace RELA/p65 and associated coregulators from the promoter. Recruited to the NF-kappa-B response element of the CCL2 and IL8 promoters and can displace CREBBP. Present with NF-kappa-B components RELA/p65 and NFKB1/p50 on ERE sequences. Can also act synergistically with NF-kappa-B to activate transcription involving respective recruitment adjacent response elements; the function involves CREBBP. Can activate the transcriptional activity of TFF1. Also mediates membrane-initiated estrogen signaling involving various kinase cascades. Essential for MTA1-mediated transcriptional regulation of BRCA1 and BCAS3. Maintains neuronal survival in response to ischemic reperfusion injury when in the presence of circulating estradiol (17-beta-estradiol/E2). This is Estrogen receptor (ESR1) from Sus scrofa (Pig).